Consider the following 236-residue polypeptide: (5-formylfuran-3-yl)methyl phosphate synthase (236 aa).

Catalysis depends on K27, which acts as the Schiff-base intermediate with substrate. K85 (proton acceptor) is an active-site residue.

Belongs to the MfnB family.

The catalysed reaction is 2 D-glyceraldehyde 3-phosphate = 4-(hydroxymethyl)-2-furancarboxaldehyde phosphate + phosphate + 2 H2O. It participates in cofactor biosynthesis; methanofuran biosynthesis. Its function is as follows. Catalyzes the formation of 4-(hydroxymethyl)-2-furancarboxaldehyde phosphate (4-HFC-P) from two molecules of glyceraldehyde-3-P (GA-3-P). The protein is (5-formylfuran-3-yl)methyl phosphate synthase of Methanococcus maripaludis (strain C6 / ATCC BAA-1332).